A 435-amino-acid chain; its full sequence is T-cell defective protein 2 (435 aa).

Positions N65–I146 are disordered. The stretch at T322–I352 forms a coiled coil. The tract at residues F393–T419 is disordered.

Strongly expressed in the cytoplasm of the pharynx muscle cells and several head neurons, probably the IL1s or IL2s, throughout development. Also expressed in some other unidentified neurons in the tail region. Weakly expressed in the nuclei of the T-cells and the T-cell daughters. Not expressed in gonads and in P12 cell.

The protein localises to the nucleus. The protein resides in the cytoplasm. Its function is as follows. May act synergistically with the Wnt pathways to control T-cell fate specification, gonad development, and P12 cell fate specification. Required for the distribution of pop-1 and tlp-1 proteins. The chain is T-cell defective protein 2 (tcl-2) from Caenorhabditis elegans.